We begin with the raw amino-acid sequence, 252 residues long: Triosephosphate isomerase (252 aa).

A substrate-binding site is contributed by 9–11; it reads NWK. Residue H95 is the Electrophile of the active site. The Proton acceptor role is filled by E167. Substrate is bound by residues G173, S211, and 232-233; that span reads GG.

This sequence belongs to the triosephosphate isomerase family. In terms of assembly, homodimer.

Its subcellular location is the cytoplasm. It catalyses the reaction D-glyceraldehyde 3-phosphate = dihydroxyacetone phosphate. It participates in carbohydrate biosynthesis; gluconeogenesis. The protein operates within carbohydrate degradation; glycolysis; D-glyceraldehyde 3-phosphate from glycerone phosphate: step 1/1. Involved in the gluconeogenesis. Catalyzes stereospecifically the conversion of dihydroxyacetone phosphate (DHAP) to D-glyceraldehyde-3-phosphate (G3P). This Marinobacter nauticus (strain ATCC 700491 / DSM 11845 / VT8) (Marinobacter aquaeolei) protein is Triosephosphate isomerase.